Consider the following 215-residue polypeptide: Glutathione S-transferase D2 (215 aa).

One can recognise a GST N-terminal domain in the interval 1-80 (MDFYYMPGGG…YLVEKYGKDD (80 aa)). Residues 50–52 (HTI) and 64–66 (ESR) contribute to the glutathione site. Residues 86–212 (DPKKRAVINQ…MKALFDARKL (127 aa)) enclose the GST C-terminal domain.

The protein belongs to the GST superfamily. Delta family. As to quaternary structure, homodimer.

The enzyme catalyses RX + glutathione = an S-substituted glutathione + a halide anion + H(+). Its function is as follows. Conjugation of reduced glutathione to a wide number of exogenous and endogenous hydrophobic electrophiles. May be involved in detoxification. The chain is Glutathione S-transferase D2 from Drosophila melanogaster (Fruit fly).